A 140-amino-acid chain; its full sequence is MTVIDAKGLILGRLASSVAKQLLSGDEKVYIINAEKAIISGSRAATLREYRETRDRGATEFGPYFPKRPDRILKRTIRGMLPYKRARGRDAMSRLKVYVGVPYELKGAETTTIADADMRLLSSNKYVELGEVSQKMGSKF.

This sequence belongs to the universal ribosomal protein uL13 family. Part of the 50S ribosomal subunit.

This protein is one of the early assembly proteins of the 50S ribosomal subunit, although it is not seen to bind rRNA by itself. It is important during the early stages of 50S assembly. The chain is Large ribosomal subunit protein uL13 from Methanosarcina mazei (strain ATCC BAA-159 / DSM 3647 / Goe1 / Go1 / JCM 11833 / OCM 88) (Methanosarcina frisia).